The primary structure comprises 622 residues: Galactolipid galactosyltransferase SFR2, chloroplastic (622 aa).

At 1–3 (MEL) the chain is on the stromal side. A helical; Signal-anchor membrane pass occupies residues 4 to 24 (FALLIKVAGLLATVTVGANVV). Residues 25–622 (SYSRFRRQNL…LHPALASPFD (598 aa)) are Cytoplasmic-facing. A beta-D-glucoside contacts are provided by residues His222, 266-267 (NE), Tyr377, Glu429, Trp467, 474-475 (EW), and Phe483. Catalysis depends on Glu267, which acts as the Proton donor. Glu429 (nucleophile) is an active-site residue.

It belongs to the glycosyl hydrolase 1 family. In terms of tissue distribution, expressed in hypocotyls, cotyledons, stems, leaves, pedicels, sepals, anthers and pistils. Limited expression in roots. Not detected in petals or filaments.

It is found in the plastid. It localises to the chloroplast. The protein resides in the chloroplast outer membrane. It catalyses the reaction 2 a 1,2-diacyl-3-O-(beta-D-galactosyl)-sn-glycerol = a 1,2-diacyl-3-O-[beta-D-galactosyl-(1-&gt;6)-beta-D-galactosyl]-sn-glycerol + a 1,2-diacyl-sn-glycerol. Its activity is regulated as follows. Induced by MgCl(2). In terms of biological role, glycosyl hydrolase family protein acting primarily as a highly specific galactosyltransferase. Synthesizes digalactosyldiacylglycerol from monogalactosyldiacylglycerol in the absence of UDP-galactose in vitro. Hydrolyzes o- and p-nitrophenyl beta-D-glucoside in vitro. Plays a role in freezing tolerance. May play a role in chloroplast protection. The protein is Galactolipid galactosyltransferase SFR2, chloroplastic of Arabidopsis thaliana (Mouse-ear cress).